The following is a 299-amino-acid chain: Arginase (299 aa).

Mn(2+) is bound by residues H99, D122, H124, and D126. Substrate is bound by residues 124–128 (HGDVN), 135–137 (SGN), and D178. Mn(2+) is bound by residues D226 and D228. 2 residues coordinate substrate: T240 and E271.

It belongs to the arginase family. Homohexamer. It depends on Mn(2+) as a cofactor.

It catalyses the reaction L-arginine + H2O = urea + L-ornithine. It functions in the pathway nitrogen metabolism; urea cycle; L-ornithine and urea from L-arginine: step 1/1. Controls arginine catabolism. The sequence is that of Arginase (rocF) from Bacillus caldovelox.